The sequence spans 283 residues: Pantothenate synthetase (283 aa).

30–37 lines the ATP pocket; it reads MGNLHDGH. Residue histidine 37 is the Proton donor of the active site. A (R)-pantoate-binding site is contributed by glutamine 61. Glutamine 61 provides a ligand contact to beta-alanine. Position 149-152 (149-152) interacts with ATP; it reads GEKD. Residue glutamine 155 coordinates (R)-pantoate. Position 186-189 (186-189) interacts with ATP; that stretch reads LSSR.

It belongs to the pantothenate synthetase family. In terms of assembly, homodimer.

Its subcellular location is the cytoplasm. The enzyme catalyses (R)-pantoate + beta-alanine + ATP = (R)-pantothenate + AMP + diphosphate + H(+). The protein operates within cofactor biosynthesis; (R)-pantothenate biosynthesis; (R)-pantothenate from (R)-pantoate and beta-alanine: step 1/1. Functionally, catalyzes the condensation of pantoate with beta-alanine in an ATP-dependent reaction via a pantoyl-adenylate intermediate. This is Pantothenate synthetase from Shigella sonnei (strain Ss046).